The primary structure comprises 306 residues: D-alanine--D-alanine ligase (306 aa).

The ATP-grasp domain maps to 107–303 (KHLFKSAGLS…FEQLVVRILE (197 aa)). 134 to 189 (IMQQFKKVMVKPSHEGSSIGMAQASTPQELEDALSNAFKFDSQVLVEQWISGREFT) contributes to the ATP binding site. 3 residues coordinate Mg(2+): Asp-257, Glu-270, and Asn-272.

The protein belongs to the D-alanine--D-alanine ligase family. Mg(2+) is required as a cofactor. The cofactor is Mn(2+).

It localises to the cytoplasm. It carries out the reaction 2 D-alanine + ATP = D-alanyl-D-alanine + ADP + phosphate + H(+). Its pathway is cell wall biogenesis; peptidoglycan biosynthesis. Functionally, cell wall formation. The polypeptide is D-alanine--D-alanine ligase (Pseudoalteromonas translucida (strain TAC 125)).